A 430-amino-acid chain; its full sequence is Trigger factor (430 aa).

A PPIase FKBP-type domain is found at 163–248; that stretch reads GNIAIIDFKG…IKDIKVKELP (86 aa).

This sequence belongs to the FKBP-type PPIase family. Tig subfamily.

Its subcellular location is the cytoplasm. The enzyme catalyses [protein]-peptidylproline (omega=180) = [protein]-peptidylproline (omega=0). In terms of biological role, involved in protein export. Acts as a chaperone by maintaining the newly synthesized protein in an open conformation. Functions as a peptidyl-prolyl cis-trans isomerase. The polypeptide is Trigger factor (Clostridium botulinum (strain Langeland / NCTC 10281 / Type F)).